A 199-amino-acid chain; its full sequence is ATP-dependent Clp protease proteolytic subunit (199 aa).

Positions 1 to 23 (MTTSAARKGLRTRGSACPRATRS) are disordered. Ser100 (nucleophile) is an active-site residue. The active site involves His125.

The protein belongs to the peptidase S14 family. Fourteen ClpP subunits assemble into 2 heptameric rings which stack back to back to give a disk-like structure with a central cavity, resembling the structure of eukaryotic proteasomes.

It localises to the cytoplasm. It catalyses the reaction Hydrolysis of proteins to small peptides in the presence of ATP and magnesium. alpha-casein is the usual test substrate. In the absence of ATP, only oligopeptides shorter than five residues are hydrolyzed (such as succinyl-Leu-Tyr-|-NHMec, and Leu-Tyr-Leu-|-Tyr-Trp, in which cleavage of the -Tyr-|-Leu- and -Tyr-|-Trp bonds also occurs).. Functionally, cleaves peptides in various proteins in a process that requires ATP hydrolysis. Has a chymotrypsin-like activity. Plays a major role in the degradation of misfolded proteins. The chain is ATP-dependent Clp protease proteolytic subunit from Paracoccus denitrificans.